The primary structure comprises 561 residues: Cation diffusion facilitator family protein 1 (561 aa).

Residues 1–20 are compositionally biased toward basic and acidic residues; it reads MEVTMEDRSVKADKADRDDN. The segment at 1 to 26 is disordered; the sequence is MEVTMEDRSVKADKADRDDNNTTSTE. The Cytoplasmic portion of the chain corresponds to 1–112; it reads MEVTMEDRSV…SESVKGVSRS (112 aa). Residues 113 to 133 form a helical membrane-spanning segment; that stretch reads LIIQIGMTVIFCALEFITGVV. The Extracellular segment spans residues 134–136; the sequence is CSS. Residues 137-157 traverse the membrane as a helical segment; sequence IAMLADSYHMAADVMALIVAF. Over 158-176 the chain is Cytoplasmic; the sequence is TCIKIATRPSTRLGYGWVR. Residues 177–197 form a helical membrane-spanning segment; it reads AETLGGFFNGIFMCTVCVLVF. The Extracellular segment spans residues 198 to 215; that stretch reads QEAVGRIINVHMITHPLQ. Residues 216–236 traverse the membrane as a helical segment; that stretch reads VLVIGFIGLLINLFGMFNLSG. Residues 237–391 are Cytoplasmic-facing; the sequence is HGHSHGGGSH…NVNIHGVWLH (155 aa). The disordered stretch occupies residues 240 to 304; sequence SHGGGSHGHS…HTRLNGKFRS (65 aa). The segment at 246–270 is 6 X 2 AA approximate repeats of H-G; sequence HGHSHGGSHGHSHNNKKTKKNDGHG. Over residues 247–264 the composition is skewed to basic residues; the sequence is GHSHGGSHGHSHNNKKTK. Residues 392-412 traverse the membrane as a helical segment; the sequence is LLSDAFGSVIVMISAGFVYFL. At 413 to 420 the chain is on the extracellular side; that stretch reads PTWKIAAY. A helical membrane pass occupies residues 421–441; that stretch reads LDPILSISLASIMGFTAVVLV. The Cytoplasmic segment spans residues 442 to 561; that stretch reads KTSGEKLLKQ…SVSTENEITE (120 aa).

This sequence belongs to the cation diffusion facilitator (CDF) transporter (TC 2.A.4) family. SLC30A subfamily. As to quaternary structure, interacts with lin-45 in a zinc-dependent manner. Expressed in intestinal cells. Expressed in the vulva.

The protein resides in the basolateral cell membrane. In terms of biological role, involved in the regulation of Pn.p cell fate determination. Involved in zinc metabolism and the decrease of the cytosolic zinc concentration which is thought to modulate Ras signaling. Involved in zinc transport from the intestinal lumen to the pseudocoelum. In Caenorhabditis elegans, this protein is Cation diffusion facilitator family protein 1 (cdf-1).